We begin with the raw amino-acid sequence, 229 residues long: Cytochrome c oxidase assembly factor 7 (229 aa).

Sel1-like repeat units lie at residues 34 to 66, 68 to 104, 108 to 145, 146 to 182, and 183 to 218; these read PEGC…EVNA, AQSC…NTQG, VDAC…EGGF, APSC…DLGH, and VWGC…DLHG. Positions 197-229 are disordered; it reads DGTDKDEQRAEELKNRAKDLHGQEKERQLKFGE.

Belongs to the hcp beta-lactamase family.

The protein resides in the mitochondrion intermembrane space. In terms of biological role, may be required for assembly of mitochondrial respiratory chain complexes. This chain is Cytochrome c oxidase assembly factor 7 (coa7), found in Danio rerio (Zebrafish).